Here is a 331-residue protein sequence, read N- to C-terminus: PDZ and LIM domain protein 4 (331 aa).

The PDZ domain maps to 1–84; it reads MPHSVTLRGP…HLTLSVSRPE (84 aa). Disordered regions lie at residues 80 to 99, 105 to 152, and 221 to 243; these read VSRP…KAQA, DSEA…GSNS, and AGEG…ASKL. 4 positions are modified to phosphoserine: serine 112, serine 116, serine 120, and serine 135. The LIM zinc-binding domain maps to 254 to 313; it reads PECTRCGHGIVGTIVKARDKLYHPECFMCSDCGLNLKQRGYFFLDERLYCESHAKARVKP.

As to quaternary structure, homodimer. Interacts (via C-terminus only or via combined C-terminus and LIM domain, but not LIM domain only) with PTPN13 (via the second or fourth PDZ domains). Found in a complex with PTPN13 and TRIP6. Interacts (via PDZ domain) with ACTN1 and ACTN2 (via C-terminal SDL residues). Interacts (via PDZ domain) with TRIP6 (via the second LIM domain or via the third LIM domain plus C-terminus). Interacts (via LIM domain) with GRIA1 (via C-terminus); this interaction as well as the interaction with alpha-actinin is required for their colocalization in early endosomes. Interacts with PDLIM1. Forms (via LIM domain) a heterodimer with PDLIM3. Interacts directly with SRC (via kinase domain and to a lesser extent the SH2 domain). In terms of processing, phosphorylated on tyrosine residue(s). Can be dephosphorylated by PTPN13.

The protein localises to the cytoplasm. The protein resides in the cytoskeleton. It localises to the cell projection. It is found in the dendritic spine. Its subcellular location is the early endosome membrane. The protein localises to the recycling endosome membrane. The protein resides in the nucleus. It localises to the perinuclear region. It is found in the lamellipodium. Its subcellular location is the synapse. The protein localises to the synaptosome. Suppresses SRC activation by recognizing and binding to active SRC and facilitating PTPN13-mediated dephosphorylation of SRC 'Tyr-419' leading to its inactivation. Inactivated SRC dissociates from this protein allowing the initiation of a new SRC inactivation cycle. Involved in reorganization of the actin cytoskeleton. In nonmuscle cells, binds to ACTN1 (alpha-actinin-1), increases the affinity of ACTN1 to F-actin (filamentous actin), and promotes formation of actin stress fibers. Involved in regulation of the synaptic AMPA receptor transport in dendritic spines of hippocampal pyramidal neurons directing the receptors toward an insertion at the postsynaptic membrane. Links endosomal surface-internalized GRIA1-containing AMPA receptors to the alpha-actinin/actin cytoskeleton. Increases AMPA receptor-mediated excitatory postsynaptic currents in neurons. The protein is PDZ and LIM domain protein 4 (PDLIM4) of Bos taurus (Bovine).